The chain runs to 98 residues: NADH-ubiquinone oxidoreductase chain 4L (98 aa).

The next 3 membrane-spanning stretches (helical) occupy residues 1–21, 29–49, and 61–81; these read MSLI…GLLM, ALLC…LTIL, and IILL…LVMV.

The protein belongs to the complex I subunit 4L family. In terms of assembly, core subunit of respiratory chain NADH dehydrogenase (Complex I) which is composed of 45 different subunits.

The protein resides in the mitochondrion inner membrane. It catalyses the reaction a ubiquinone + NADH + 5 H(+)(in) = a ubiquinol + NAD(+) + 4 H(+)(out). Functionally, core subunit of the mitochondrial membrane respiratory chain NADH dehydrogenase (Complex I) which catalyzes electron transfer from NADH through the respiratory chain, using ubiquinone as an electron acceptor. Part of the enzyme membrane arm which is embedded in the lipid bilayer and involved in proton translocation. This chain is NADH-ubiquinone oxidoreductase chain 4L (MT-ND4L), found in Phocoena phocoena (Harbor porpoise).